Reading from the N-terminus, the 223-residue chain is Uracil-DNA glycosylase (223 aa).

Residue Asp-67 is the Proton acceptor of the active site.

Belongs to the uracil-DNA glycosylase (UDG) superfamily. UNG family.

It is found in the cytoplasm. It catalyses the reaction Hydrolyzes single-stranded DNA or mismatched double-stranded DNA and polynucleotides, releasing free uracil.. Excises uracil residues from the DNA which can arise as a result of misincorporation of dUMP residues by DNA polymerase or due to deamination of cytosine. The polypeptide is Uracil-DNA glycosylase (Borrelia turicatae (strain 91E135)).